Consider the following 82-residue polypeptide: Opistoporin-1 (82 aa).

Residues 1-22 form the signal peptide; it reads MNRKLLFVTLMVTMLVMQPSEG. A propeptide spanning residues 67–82 is cleaved from the precursor; sequence EAGQMPFDEFMDILYE.

As to expression, expressed by the venom gland.

The protein resides in the secreted. Its subcellular location is the target cell membrane. Functionally, at high concentrations, acts as a pore former in cellular membranes and causes the leakage of the cells. At submicromolar concentrations, degranulates granulocytes and has a weak hemolytic activity against human erythrocytes. Also strongly inhibits the production of superoxide anions. Has a strong antibacterial activity against Gram-negative bacteria but is less active against Gram-positive bacteria. Also has antifungal activity. The protein is Opistoporin-1 of Opistophthalmus carinatus (African yellow leg scorpion).